A 397-amino-acid chain; its full sequence is Acetate kinase 1 (397 aa).

Asparagine 8 serves as a coordination point for Mg(2+). Lysine 15 lines the ATP pocket. Arginine 89 provides a ligand contact to substrate. The active-site Proton donor/acceptor is the aspartate 146. ATP contacts are provided by residues 206 to 210 (HLGNG), 281 to 283 (DLR), and 329 to 333 (GIGEN). Mg(2+) is bound at residue glutamate 382.

The protein belongs to the acetokinase family. As to quaternary structure, homodimer. Requires Mg(2+) as cofactor. It depends on Mn(2+) as a cofactor.

The protein localises to the cytoplasm. The enzyme catalyses acetate + ATP = acetyl phosphate + ADP. The protein operates within metabolic intermediate biosynthesis; acetyl-CoA biosynthesis; acetyl-CoA from acetate: step 1/2. Its function is as follows. Catalyzes the formation of acetyl phosphate from acetate and ATP. Can also catalyze the reverse reaction. This is Acetate kinase 1 from Listeria innocua serovar 6a (strain ATCC BAA-680 / CLIP 11262).